Consider the following 165-residue polypeptide: Putative pre-16S rRNA nuclease (165 aa).

Belongs to the YqgF nuclease family.

Its subcellular location is the cytoplasm. Could be a nuclease involved in processing of the 5'-end of pre-16S rRNA. The sequence is that of Putative pre-16S rRNA nuclease from Sinorhizobium medicae (strain WSM419) (Ensifer medicae).